The primary structure comprises 38 residues: Large ribosomal subunit protein bL36 (38 aa).

Belongs to the bacterial ribosomal protein bL36 family.

This Enterococcus faecalis (strain ATCC 700802 / V583) protein is Large ribosomal subunit protein bL36.